The following is a 184-amino-acid chain: Ribosome-recycling factor (184 aa).

Belongs to the RRF family.

The protein localises to the cytoplasm. Functionally, responsible for the release of ribosomes from messenger RNA at the termination of protein biosynthesis. May increase the efficiency of translation by recycling ribosomes from one round of translation to another. The chain is Ribosome-recycling factor from Clostridium botulinum (strain Okra / Type B1).